Consider the following 805-residue polypeptide: U-box domain-containing protein 70 (805 aa).

TPR repeat units lie at residues 15–48, 49–82, 90–127, 129–153, 154–187, 189–221, and 222–255; these read ARREKEAGNAAYRKLYLETAVRHYTRGALLDPRD, ISFLTNRAAAYLLMSKYKECVRDCDEAVEKGREL, ARALARKASALLKLAACAADYDPAIRALQQSLAEHYSE, TLAKLGEAEEARKEIEERERLDQEA, ADHHRDRGNDFFKQKRYQEAAMHYTEAMKKNPKD, RVFSNRAQCHIYLGALPEGLEDADKCIALDPTF, and LKGYLRKAKVQLLMGNYEIALATYVEGLKCDPNN. Residues 136-160 are disordered; sequence AEEARKEIEERERLDQEAADHHRDR. Residues 341–417 are a coiled coil; sequence RKETEESLSR…VREVEELRQK (77 aa). One can recognise a Protein kinase domain in the interval 445–711; the sequence is FSNSLKIGEG…GEVWAIVEAI (267 aa). ATP-binding positions include 451 to 459 and Lys-472; that span reads IGEGGFGCV. The Proton acceptor role is filled by Asp-567. The 75-residue stretch at 730–804 folds into the U-box domain; it reads SPPSYFICPI…QEWLQQHSMS (75 aa).

The protein belongs to the protein kinase superfamily. Ser/Thr protein kinase family. Interacts with MODD.

It catalyses the reaction L-seryl-[protein] + ATP = O-phospho-L-seryl-[protein] + ADP + H(+). The enzyme catalyses L-threonyl-[protein] + ATP = O-phospho-L-threonyl-[protein] + ADP + H(+). The catalysed reaction is S-ubiquitinyl-[E2 ubiquitin-conjugating enzyme]-L-cysteine + [acceptor protein]-L-lysine = [E2 ubiquitin-conjugating enzyme]-L-cysteine + N(6)-ubiquitinyl-[acceptor protein]-L-lysine.. Its pathway is protein modification; protein ubiquitination. Its function is as follows. Functions as an E3 ubiquitin ligase. Is recruited by MODD to promote ubiquitination of BZIP46, a positive regulator of abscisic acid (ABA) signaling and drought stress tolerance. This is U-box domain-containing protein 70 from Oryza sativa subsp. japonica (Rice).